The following is a 376-amino-acid chain: Carbamoyl phosphate synthase small chain (376 aa).

A CPSase region spans residues 1-183 (MSKAVLVLED…PDGPPGVSRF (183 aa)). L-glutamine is bound by residues Ser46, Gly232, and Gly234. Residues 184–376 (TVAALDLGIK…FVELMAGEGR (193 aa)) form the Glutamine amidotransferase type-1 domain. Residue Cys260 is the Nucleophile of the active site. Positions 261, 264, 302, 304, and 305 each coordinate L-glutamine. Active-site residues include His350 and Glu352.

Belongs to the CarA family. In terms of assembly, composed of two chains; the small (or glutamine) chain promotes the hydrolysis of glutamine to ammonia, which is used by the large (or ammonia) chain to synthesize carbamoyl phosphate. Tetramer of heterodimers (alpha,beta)4.

It catalyses the reaction hydrogencarbonate + L-glutamine + 2 ATP + H2O = carbamoyl phosphate + L-glutamate + 2 ADP + phosphate + 2 H(+). It carries out the reaction L-glutamine + H2O = L-glutamate + NH4(+). Its pathway is amino-acid biosynthesis; L-arginine biosynthesis; carbamoyl phosphate from bicarbonate: step 1/1. It participates in pyrimidine metabolism; UMP biosynthesis via de novo pathway; (S)-dihydroorotate from bicarbonate: step 1/3. Functionally, small subunit of the glutamine-dependent carbamoyl phosphate synthetase (CPSase). CPSase catalyzes the formation of carbamoyl phosphate from the ammonia moiety of glutamine, carbonate, and phosphate donated by ATP, constituting the first step of 2 biosynthetic pathways, one leading to arginine and/or urea and the other to pyrimidine nucleotides. The small subunit (glutamine amidotransferase) binds and cleaves glutamine to supply the large subunit with the substrate ammonia. This is Carbamoyl phosphate synthase small chain from Mycobacterium bovis (strain ATCC BAA-935 / AF2122/97).